The primary structure comprises 328 residues: AA9 family lytic polysaccharide monooxygenase A (328 aa).

An N-terminal signal peptide occupies residues 1-21 (MPSTKVAALSAVLALASTVAG). His-22 contributes to the Cu(2+) binding site. His-22 carries the methylhistidine modification. Cystine bridges form between Cys-77/Cys-199 and Cys-118/Cys-122. Asn-80 carries N-linked (GlcNAc...) asparagine glycosylation. His-107 is a Cu(2+) binding site. Residues Asn-121 and Asn-159 are each glycosylated (N-linked (GlcNAc...) asparagine). O2-binding residues include His-185 and Gln-194. Tyr-196 is a binding site for Cu(2+). Residues Ser-235 and Ser-237 are each glycosylated (O-linked (Man...) serine). Thr-238 and Thr-245 each carry an O-linked (Man...) threonine glycan.

It belongs to the polysaccharide monooxygenase AA9 family. Cu(2+) is required as a cofactor. In terms of processing, the catalytically essential N-terminal histidine His-22 is post-translationally modified by methylation to prevent protonation of the histidine side chain, and protect the critical active site of the enzyme from oxidative damage.

Its subcellular location is the secreted. The catalysed reaction is [(1-&gt;4)-beta-D-glucosyl]n+m + reduced acceptor + O2 = 4-dehydro-beta-D-glucosyl-[(1-&gt;4)-beta-D-glucosyl]n-1 + [(1-&gt;4)-beta-D-glucosyl]m + acceptor + H2O.. In terms of biological role, lytic polysaccharide monooxygenase (LPMO) that depolymerizes crystalline and amorphous polysaccharides via the oxidation of scissile alpha- or beta-(1-4)-glycosidic bonds, yielding C1 and C4 oxidation products. Catalysis by LPMOs requires the reduction of the active-site copper from Cu(II) to Cu(I) by a reducing agent and H(2)O(2) or O(2) as a cosubstrate. Shows activity on cellulosic substrates (Avicel, carboxymethylcellulose) and xylan. The chain is AA9 family lytic polysaccharide monooxygenase A from Talaromyces verruculosus (Penicillium verruculosum).